The primary structure comprises 269 residues: Shikimate dehydrogenase (NADP(+)) (269 aa).

Residues 14 to 16 and T61 each bind shikimate; that span reads SLS. K65 (proton acceptor) is an active-site residue. E76 serves as a coordination point for NADP(+). The shikimate site is built by N85 and D99. Residues 123–127, 146–151, and I209 each bind NADP(+); these read GAGGA and NRTPER. Residue Y211 coordinates shikimate. G231 serves as a coordination point for NADP(+).

This sequence belongs to the shikimate dehydrogenase family. In terms of assembly, homodimer.

It carries out the reaction shikimate + NADP(+) = 3-dehydroshikimate + NADPH + H(+). The protein operates within metabolic intermediate biosynthesis; chorismate biosynthesis; chorismate from D-erythrose 4-phosphate and phosphoenolpyruvate: step 4/7. In terms of biological role, involved in the biosynthesis of the chorismate, which leads to the biosynthesis of aromatic amino acids. Catalyzes the reversible NADPH linked reduction of 3-dehydroshikimate (DHSA) to yield shikimate (SA). The polypeptide is Shikimate dehydrogenase (NADP(+)) (Methanothrix thermoacetophila (strain DSM 6194 / JCM 14653 / NBRC 101360 / PT) (Methanosaeta thermophila)).